The primary structure comprises 289 residues: Oxaloacetate decarboxylase (289 aa).

Serine 47 provides a ligand contact to substrate. Aspartate 85 lines the Mg(2+) pocket. Substrate contacts are provided by arginine 156 and histidine 232.

This sequence belongs to the isocitrate lyase/PEP mutase superfamily. Oxaloacetate decarboxylase family. As to quaternary structure, homotetramer; dimer of dimers. Mg(2+) serves as cofactor.

It carries out the reaction oxaloacetate + H(+) = pyruvate + CO2. In terms of biological role, catalyzes the decarboxylation of oxaloacetate into pyruvate. Seems to play a role in maintaining cellular concentrations of bicarbonate and pyruvate. The chain is Oxaloacetate decarboxylase from Rhodopseudomonas palustris (strain BisA53).